The following is a 917-amino-acid chain: Transcriptional regulatory protein SEF1 (917 aa).

The interval 1-88 (MKFEKGKVRI…SKPTGHRPVT (88 aa)) is disordered. The span at 13-27 (KPSPTPTNPQTPLPL) shows a compositional bias: pro residues. Positions 56–70 (SNSTASTPNSATPTS) are enriched in low complexity. Residues 71-81 (VGTPPQKTSKP) show a composition bias toward polar residues. The zn(2)-C6 fungal-type DNA-binding region spans 90 to 120 (CTFCRQHKIKCNASDNYPNPCERCKKMGLKC). The stretch at 129-164 (RKGSQIQSLKSDVDELKAKIEMLTKNESLLTQALNQ) forms a coiled coil. 2 disordered regions span residues 168 to 212 (NHAS…ASPI) and 778 to 849 (QQYP…PFIL). Residues 171 to 184 (SQQQQSSGSQSQQQ) are compositionally biased toward low complexity. Residues 191–212 (RALSYTSANSSPQVAFSNASPI) are compositionally biased toward polar residues. The span at 778–827 (QQYPMQQDQQQQEPSQQQQQKHSQQSQQYQQQQQSNQQQPHLQHQRQFQQ) shows a compositional bias: low complexity.

As to quaternary structure, interacts with SSN3 and SFU1. Post-translationally, phosphorylated by SSN3 under iron-depleted conditions which leads to nuclear localization.

The protein localises to the cytoplasm. It is found in the nucleus. Its function is as follows. Transcription factor which plays an essential role in virulence by activating the transcription of iron uptake genes such as FRE7 in iron-poor environments such as the host bloodstream and internal organs. Promotes commensalism in a mouse model of gastrointestinal infection. The polypeptide is Transcriptional regulatory protein SEF1 (SEF1) (Candida albicans (strain SC5314 / ATCC MYA-2876) (Yeast)).